The sequence spans 800 residues: Putative antiporter subunit mnhA2 (800 aa).

A run of 21 helical transmembrane segments spans residues 1–21 (MSLVYLMATNLLFMLIVLFTL), 29–49 (VAGYVALIAPIVTSTYFIMKI), 78–98 (GLSLMFGLIISLIGVGVFFYA), 109–129 (LPRFFIYLLLFMFSMIGIVIA), 133–153 (ILMYVFWELTSISSFLLISYW), 167–187 (FMITVFGGLALLTGFIILYII), 209–229 (FIPMILMLLLGAFTKSAQFPF), 241–261 (TPVSAYLHSATMVKAGIFLLF), 272–292 (VYIYTVTFVGLITMLFGSLTA), 300–320 (GILAYSTISQLGMIMTMVGLG), 336–356 (ILVLFAGLFHLMNHAVFKCAL), 387–407 (IVMLLAALSMAGVPFLNGFLS), 424–444 (YGFVLTFVIISIGVIASILTF), 472–492 (PWLFSLPAVILMLLIPVIFFV), 528–548 (VNLPLILSIVVIIIGLILALV), 595–615 (IMITLFIFVAIVVYGYLTVGF), 627–647 (GPLEVILSVVTLIIGISLIFI), 651–671 (LTMVVLNGMIGFAVTLYFIAM), 676–696 (LALTQLVVETITTILFIVSFS), 712–732 (TFKIIVSLVMALTVVSLIFVA), and 768–788 (LDTMFEGLVLIIAGLGIYTLL).

Belongs to the CPA3 antiporters (TC 2.A.63) subunit A family. May form a heterooligomeric complex that consists of seven subunits: mnhA2, mnhB2, mnhC2, mnhD2, mnhE2, mnhF2 and mnhG2.

It localises to the cell membrane. The protein is Putative antiporter subunit mnhA2 (mnhA2) of Staphylococcus epidermidis (strain ATCC 12228 / FDA PCI 1200).